We begin with the raw amino-acid sequence, 347 residues long: MSEPVVLGIESTCDETAAAIVRGRELLSNVVASSMEEHARYGGVIPEIASRAHAEAFVPCVSKALVDANMTLADVDAIAVSAGPGLAGCLAVGVSGAKALAWAANKPIYGINHVIGHIAVTQLQFGPFPKDTLALIVSGGHTSLLHVEDMPRKIDVVGTTLDDAAGECFDKVARLLGFPYPGGPHIDRHGQNGDPHAIKVPMGLTQGKAGAAHPYDFSFSGVKTAVARWVESEQAAGHEIPVDDVCASLADSVATVLARKAMRGCRQYDSNTLIVGGGFSANSQLRAKLLEFGENYGVDVRIPQIKLCTDNGAMVAMLGVNLVEAGVAPSAPDFPIDSAMPLTKVSM.

Fe cation-binding residues include His113 and His117. Residues 136–140 (IVSGG), Asp170, Gly183, Asp187, and Asn282 each bind substrate. Position 310 (Asp310) interacts with Fe cation.

It belongs to the KAE1 / TsaD family. Requires Fe(2+) as cofactor.

The protein localises to the cytoplasm. The catalysed reaction is L-threonylcarbamoyladenylate + adenosine(37) in tRNA = N(6)-L-threonylcarbamoyladenosine(37) in tRNA + AMP + H(+). Functionally, required for the formation of a threonylcarbamoyl group on adenosine at position 37 (t(6)A37) in tRNAs that read codons beginning with adenine. Is involved in the transfer of the threonylcarbamoyl moiety of threonylcarbamoyl-AMP (TC-AMP) to the N6 group of A37, together with TsaE and TsaB. TsaD likely plays a direct catalytic role in this reaction. The polypeptide is tRNA N6-adenosine threonylcarbamoyltransferase (Bifidobacterium longum (strain NCC 2705)).